A 130-amino-acid polypeptide reads, in one-letter code: Peptide methionine sulfoxide reductase MsrB (130 aa).

In terms of domain architecture, MsrB spans 8 to 130 (LEEWRSMLDP…NSVCLDLVPR (123 aa)). Residues Cys-47, Cys-50, Cys-96, and Cys-99 each contribute to the Zn(2+) site. Cys-119 functions as the Nucleophile in the catalytic mechanism.

Belongs to the MsrB Met sulfoxide reductase family. Zn(2+) serves as cofactor.

It catalyses the reaction L-methionyl-[protein] + [thioredoxin]-disulfide + H2O = L-methionyl-(R)-S-oxide-[protein] + [thioredoxin]-dithiol. The chain is Peptide methionine sulfoxide reductase MsrB from Pseudomonas fluorescens (strain ATCC BAA-477 / NRRL B-23932 / Pf-5).